The chain runs to 684 residues: DNA-directed RNA polymerase subunit beta' (684 aa).

Positions 69, 71, 87, and 90 each coordinate Zn(2+). Positions 489, 491, and 493 each coordinate Mg(2+).

The protein belongs to the RNA polymerase beta' chain family. RpoC1 subfamily. In plastids the minimal PEP RNA polymerase catalytic core is composed of four subunits: alpha, beta, beta', and beta''. When a (nuclear-encoded) sigma factor is associated with the core the holoenzyme is formed, which can initiate transcription. The cofactor is Mg(2+). Requires Zn(2+) as cofactor.

It is found in the plastid. The protein resides in the chloroplast. It carries out the reaction RNA(n) + a ribonucleoside 5'-triphosphate = RNA(n+1) + diphosphate. In terms of biological role, DNA-dependent RNA polymerase catalyzes the transcription of DNA into RNA using the four ribonucleoside triphosphates as substrates. This Morus indica (Mulberry) protein is DNA-directed RNA polymerase subunit beta'.